We begin with the raw amino-acid sequence, 175 residues long: MGKIIFYEDRNFQGRSYECMSDCSDITTYMSRCQSCRVESGCFMVYERPNFMGMQFFLRRGEYHDMQRMMSMGMMFDSIRSCRYPYRAFRMRIYEREYFGGQMSELMGDCDSIMDRFRMSDCMYCHVMDGHWLMYEQAHYRGKMMYLRPGEYRSFRDMGMSGMRFMSMRRITDMC.

Beta/gamma crystallin 'Greek key' domains are found at residues 2–40 (GKII…RVES), 41–86 (GCFM…RYPY), 89–121 (FRMR…RMSD), and 130–172 (GHWL…RRIT).

The protein belongs to the beta/gamma-crystallin family. In terms of assembly, monomer.

Crystallins are the dominant structural components of the vertebrate eye lens. The chain is Gamma-crystallin M1 (GM1) from Chiloscyllium indicum (Slender bamboo shark).